The chain runs to 301 residues: tRNA pseudouridine synthase B (301 aa).

Residue Asp38 is the Nucleophile of the active site.

Belongs to the pseudouridine synthase TruB family. Type 1 subfamily.

It carries out the reaction uridine(55) in tRNA = pseudouridine(55) in tRNA. Functionally, responsible for synthesis of pseudouridine from uracil-55 in the psi GC loop of transfer RNAs. In Limosilactobacillus reuteri (strain DSM 20016) (Lactobacillus reuteri), this protein is tRNA pseudouridine synthase B.